A 184-amino-acid chain; its full sequence is MLIVGLGNPGANYERTRHNIGFMVIDELVKKQNAQKISSSFDGTLFKFSNHFLLKPLTFMNLSGSAIRDVKQFYKIDEVVVIHDDLDLPFGTLRFKKGGGHGGHNGLRSTDEHISKEYIRVRMGIGKPEHKGEVASYVLSNFTKDEQAHLDEFITFTCKAIEALLTNTLEDVSSKYTIKNFPLK.

Y13 lines the tRNA pocket. The Proton acceptor role is filled by H18. TRNA contacts are provided by F59, N61, and N105.

It belongs to the PTH family. Monomer.

The protein localises to the cytoplasm. The enzyme catalyses an N-acyl-L-alpha-aminoacyl-tRNA + H2O = an N-acyl-L-amino acid + a tRNA + H(+). Its function is as follows. Hydrolyzes ribosome-free peptidyl-tRNAs (with 1 or more amino acids incorporated), which drop off the ribosome during protein synthesis, or as a result of ribosome stalling. Functionally, catalyzes the release of premature peptidyl moieties from peptidyl-tRNA molecules trapped in stalled 50S ribosomal subunits, and thus maintains levels of free tRNAs and 50S ribosomes. This Sulfurimonas denitrificans (strain ATCC 33889 / DSM 1251) (Thiomicrospira denitrificans (strain ATCC 33889 / DSM 1251)) protein is Peptidyl-tRNA hydrolase.